Reading from the N-terminus, the 263-residue chain is Probable ABC transporter permease protein slr1045 (263 aa).

7 helical membrane passes run 12–32, 52–72, 97–117, 140–162, 167–186, 192–212, and 234–254; these read LWFQRLVAAFFLTGQVFLHIL, SMAIALITAGFVGMVFTIQVA, APVLTAVVIAGRVGSAFAAEI, LVVPRVIACGLMLPILTGLSLFV, GLVISSSLYAINPTIFLNSV, LWDVFACLFKSLVFGVIIAII, and AVVTSLLAIFISNFFLSWLMF.

The protein belongs to the MlaE permease family.

Its subcellular location is the cell membrane. In terms of biological role, could be part of an ABC transporter complex. The protein is Probable ABC transporter permease protein slr1045 of Synechocystis sp. (strain ATCC 27184 / PCC 6803 / Kazusa).